Reading from the N-terminus, the 211-residue chain is Thymidylate kinase (211 aa).

11–18 is a binding site for ATP; sequence GPDGAGKT.

The protein belongs to the thymidylate kinase family.

It catalyses the reaction dTMP + ATP = dTDP + ADP. In terms of biological role, phosphorylation of dTMP to form dTDP in both de novo and salvage pathways of dTTP synthesis. The protein is Thymidylate kinase of Streptococcus uberis (strain ATCC BAA-854 / 0140J).